A 114-amino-acid chain; its full sequence is T cell receptor beta variable 5-4 (114 aa).

The signal sequence occupies residues 1-21; sequence MGPGLLCWALLCLLGAGSVET. The Ig-like domain maps to 22 to 114; that stretch reads GVTQSPTHLI…SALYLCASSL (93 aa). An intrachain disulfide couples cysteine 42 to cysteine 110. The N-linked (GlcNAc...) asparagine glycan is linked to asparagine 90.

In terms of assembly, alpha-beta TR is a heterodimer composed of an alpha and beta chain; disulfide-linked. The alpha-beta TR is associated with the transmembrane signaling CD3 coreceptor proteins to form the TR-CD3 (TcR or TCR). The assembly of alpha-beta TR heterodimers with CD3 occurs in the endoplasmic reticulum where a single alpha-beta TR heterodimer associates with one CD3D-CD3E heterodimer, one CD3G-CD3E heterodimer and one CD247 homodimer forming a stable octameric structure. CD3D-CD3E and CD3G-CD3E heterodimers preferentially associate with TR alpha and TR beta chains, respectively. The association of the CD247 homodimer is the last step of TcR assembly in the endoplasmic reticulum and is required for transport to the cell surface.

The protein localises to the cell membrane. V region of the variable domain of T cell receptor (TR) beta chain that participates in the antigen recognition. Alpha-beta T cell receptors are antigen specific receptors which are essential to the immune response and are present on the cell surface of T lymphocytes. Recognize peptide-major histocompatibility (MH) (pMH) complexes that are displayed by antigen presenting cells (APC), a prerequisite for efficient T cell adaptive immunity against pathogens. Binding of alpha-beta TR to pMH complex initiates TR-CD3 clustering on the cell surface and intracellular activation of LCK that phosphorylates the ITAM motifs of CD3G, CD3D, CD3E and CD247 enabling the recruitment of ZAP70. In turn ZAP70 phosphorylates LAT, which recruits numerous signaling molecules to form the LAT signalosome. The LAT signalosome propagates signal branching to three major signaling pathways, the calcium, the mitogen-activated protein kinase (MAPK) kinase and the nuclear factor NF-kappa-B (NF-kB) pathways, leading to the mobilization of transcription factors that are critical for gene expression and essential for T cell growth and differentiation. The T cell repertoire is generated in the thymus, by V-(D)-J rearrangement. This repertoire is then shaped by intrathymic selection events to generate a peripheral T cell pool of self-MH restricted, non-autoaggressive T cells. Post-thymic interaction of alpha-beta TR with the pMH complexes shapes TR structural and functional avidity. The polypeptide is T cell receptor beta variable 5-4 (Homo sapiens (Human)).